A 1649-amino-acid chain; its full sequence is DNA-directed RNA polymerase subunit beta' (1649 aa).

Positions 62, 64, 77, and 80 each coordinate Zn(2+). The Mg(2+) site is built by Asp-746, Asp-748, and Asp-750. Residues Cys-1077, Cys-1268, Cys-1275, and Cys-1278 each contribute to the Zn(2+) site.

This sequence belongs to the RNA polymerase beta' chain family. In terms of assembly, the RNAP catalytic core consists of 2 alpha, 1 beta, 1 beta' and 1 omega subunit. When a sigma factor is associated with the core the holoenzyme is formed, which can initiate transcription. The cofactor is Mg(2+). Zn(2+) is required as a cofactor.

The catalysed reaction is RNA(n) + a ribonucleoside 5'-triphosphate = RNA(n+1) + diphosphate. Its function is as follows. DNA-dependent RNA polymerase catalyzes the transcription of DNA into RNA using the four ribonucleoside triphosphates as substrates. This is DNA-directed RNA polymerase subunit beta' from Thermosipho africanus (strain TCF52B).